A 497-amino-acid chain; its full sequence is Validamine 7-phosphate valienyltransferase (497 aa).

Residue Asp158 participates in GDP-valienol binding. Residue His182 participates in validamine 7-phosphate binding. Residues Arg290, Lys295, Arg321, 325-326, 361-362, and Thr366 contribute to the GDP-valienol site; these read NR and ND. 383 to 386 is a validamine 7-phosphate binding site; that stretch reads DGQN. Residues 387-388 and Glu391 each bind GDP-valienol; that span reads LS.

It belongs to the glycosyltransferase 20 family. Homodimer.

It catalyses the reaction validamine 7-phosphate + GDP-valienol = validoxylamine A 7'-phosphate + GDP + H(+). Involved in the biosynthesis of the antifungal agent validamycin A. Catalyzes the condensation between GDP-valienol and validamine 7-phosphate via a nonglycosidic C-N bond formation to yield validoxylamine A 7'-phosphate. This chain is Validamine 7-phosphate valienyltransferase, found in Streptomyces hygroscopicus subsp. limoneus.